The sequence spans 209 residues: Vacuolar protein sorting-associated protein 28 homolog (209 aa).

The VPS28 N-terminal domain maps to 1 to 105 (MSQNSNLMRE…REGRPITVKD (105 aa)). In terms of domain architecture, VPS28 C-terminal spans 109-205 (NVLKHIASIV…AYQSFQKALN (97 aa)).

This sequence belongs to the VPS28 family. In terms of assembly, component of the ESCRT-I complex (endosomal sorting complex required for transport I).

The protein resides in the endosome. Functionally, component of the ESCRT-I complex, a regulator of vesicular trafficking process. The polypeptide is Vacuolar protein sorting-associated protein 28 homolog (Caenorhabditis briggsae).